Consider the following 351-residue polypeptide: Sesquiterpene synthase 14 (351 aa).

Mg(2+)-binding residues include Asp-87, Asn-223, Ser-227, and Glu-231. Residues 87-91 (DEYTD) carry the DDXXD motif motif. The NSE/DTE motif motif lies at 223 to 231 (NDIASYNKE). Residues Arg-312 and Tyr-313 each contribute to the (2E,6E)-farnesyl diphosphate site.

The protein belongs to the terpene synthase family. The cofactor is Mg(2+).

It catalyses the reaction (2E,6E)-farnesyl diphosphate = pentalenene + diphosphate. Functionally, terpene cyclase that catalyzes the cyclization of farnesyl diphosphate (FPP) to pentalenene as a major product, as well as caryophyllene. This chain is Sesquiterpene synthase 14, found in Postia placenta (strain ATCC 44394 / Madison 698-R) (Brown rot fungus).